An 874-amino-acid polypeptide reads, in one-letter code: Alanine--tRNA ligase (874 aa).

Zn(2+)-binding residues include His559, His563, Cys661, and His665.

Belongs to the class-II aminoacyl-tRNA synthetase family. Zn(2+) is required as a cofactor.

Its subcellular location is the cytoplasm. It catalyses the reaction tRNA(Ala) + L-alanine + ATP = L-alanyl-tRNA(Ala) + AMP + diphosphate. Functionally, catalyzes the attachment of alanine to tRNA(Ala) in a two-step reaction: alanine is first activated by ATP to form Ala-AMP and then transferred to the acceptor end of tRNA(Ala). Also edits incorrectly charged Ser-tRNA(Ala) and Gly-tRNA(Ala) via its editing domain. This Microcystis aeruginosa (strain NIES-843 / IAM M-2473) protein is Alanine--tRNA ligase.